Reading from the N-terminus, the 181-residue chain is Protein Syd (181 aa).

It belongs to the Syd family.

It localises to the cell inner membrane. In terms of biological role, interacts with the SecY protein in vivo. May bind preferentially to an uncomplexed state of SecY, thus functioning either as a chelating agent for excess SecY in the cell or as a regulatory factor that negatively controls the translocase function. This is Protein Syd from Cronobacter sakazakii (strain ATCC BAA-894) (Enterobacter sakazakii).